Here is a 264-residue protein sequence, read N- to C-terminus: Thymidylate synthase (264 aa).

Position 21 (Arg-21) interacts with dUMP. (6R)-5,10-methylene-5,6,7,8-tetrahydrofolate is bound at residue His-51. Position 126 to 127 (126 to 127) interacts with dUMP; sequence RR. Cys-146 acts as the Nucleophile in catalysis. DUMP is bound by residues 166–169, Asn-177, and 207–209; these read RSAD and HLY. A (6R)-5,10-methylene-5,6,7,8-tetrahydrofolate-binding site is contributed by Asp-169. Position 263 (Ala-263) interacts with (6R)-5,10-methylene-5,6,7,8-tetrahydrofolate.

The protein belongs to the thymidylate synthase family. Bacterial-type ThyA subfamily. In terms of assembly, homodimer.

The protein resides in the cytoplasm. It catalyses the reaction dUMP + (6R)-5,10-methylene-5,6,7,8-tetrahydrofolate = 7,8-dihydrofolate + dTMP. It participates in pyrimidine metabolism; dTTP biosynthesis. Functionally, catalyzes the reductive methylation of 2'-deoxyuridine-5'-monophosphate (dUMP) to 2'-deoxythymidine-5'-monophosphate (dTMP) while utilizing 5,10-methylenetetrahydrofolate (mTHF) as the methyl donor and reductant in the reaction, yielding dihydrofolate (DHF) as a by-product. This enzymatic reaction provides an intracellular de novo source of dTMP, an essential precursor for DNA biosynthesis. In Pseudomonas aeruginosa (strain LESB58), this protein is Thymidylate synthase.